The sequence spans 120 residues: uncharacterized protein (120 aa).

An N-acetyltransferase domain is found at 3-120; sequence IRYKKAFEKI…EKCEICHGSE (118 aa).

This is an uncharacterized protein from Bacillus methanolicus.